We begin with the raw amino-acid sequence, 92 residues long: Bombyxin A-1 (92 aa).

The N-terminal stretch at 1–19 (MKILLAIALMLSTVMWVST) is a signal peptide. Residue glutamine 20 is modified to Pyrrolidone carboxylic acid. Cystine bridges form between cysteine 29-cysteine 79, cysteine 41-cysteine 92, and cysteine 78-cysteine 83. A propeptide spans 50 to 70 (SGAQFASYGSAWLMPYSEGRG) (c peptide like).

Belongs to the insulin family. In terms of assembly, heterodimer of a B chain and an A chain linked by two disulfide bonds.

It localises to the secreted. Brain peptide responsible for activation of prothoracic glands to produce ecdysone in insects. The protein is Bombyxin A-1 (BBXA1) of Bombyx mori (Silk moth).